The primary structure comprises 363 residues: NADH-quinone oxidoreductase subunit H (363 aa).

Transmembrane regions (helical) follow at residues 62–82, 96–116, 127–147, 163–183, 202–222, 238–257, 264–286, 299–319, and 339–359; these read GPMYVGMGIFQAFADVFKLLF, FVIAPLLTLAPAFAAWSVVPF, VGLLYLLAMTSLGVYGIILAG, AAQVVSYEIAMGFALVGVMIA, FFDWFLIPLFPLFIVYWVSGV, EIVAGHMVEYSGGAFALFFL, ILVSFLISIFFLGGWLSPIQGWV, KGGWPWLLMKVFFFASAYIWF, and FIPLTIVWIAVTALMVFYGVI.

This sequence belongs to the complex I subunit 1 family. In terms of assembly, NDH-1 is composed of 14 different subunits. Subunits NuoA, H, J, K, L, M, N constitute the membrane sector of the complex.

The protein resides in the cell inner membrane. It carries out the reaction a quinone + NADH + 5 H(+)(in) = a quinol + NAD(+) + 4 H(+)(out). Functionally, NDH-1 shuttles electrons from NADH, via FMN and iron-sulfur (Fe-S) centers, to quinones in the respiratory chain. The immediate electron acceptor for the enzyme in this species is believed to be ubiquinone. Couples the redox reaction to proton translocation (for every two electrons transferred, four hydrogen ions are translocated across the cytoplasmic membrane), and thus conserves the redox energy in a proton gradient. This subunit may bind ubiquinone. This chain is NADH-quinone oxidoreductase subunit H, found in Xanthomonas axonopodis pv. citri (strain 306).